Reading from the N-terminus, the 355-residue chain is Neurogenic differentiation factor 1 (355 aa).

The tract at residues 1–93 is disordered; it reads MTKSYSESGL…GPKKKKMTKA (93 aa). Acidic residues predominate over residues 58–77; it reads DEEDEDEDLEEEDEEEEEDD. Positions 80 to 92 are enriched in basic residues; sequence PKRRGPKKKKMTK. Residues 86–92 carry the Nuclear localization signal motif; that stretch reads KKKKMTK. The bHLH domain occupies 100–152; it reads LRRMKANARERNRMHGLNAALDNLRKVVPCYSKTQKLSKIETLRLAKNYIWAL. Residues Ser-161, Ser-258, Ser-265, and Ser-273 each carry the phosphoserine modification. Position 334 is a phosphoserine; by CaMK2 (Ser-334).

As to quaternary structure, efficient DNA-binding requires dimerization with another bHLH protein. Heterodimer with TCF3/E47; the heterodimer is inhibited in presence of ID2, but not NR0B2, to E-box element. Interacts with EP300; the interaction is inhibited by NR0B2. Interacts with RREB1. Interacts with ATOH8. Phosphorylated. In islet cells, phosphorylated on Ser-273 upon glucose stimulation; which may be required for nuclear localization. In activated neurons, phosphorylated on Ser-334; which promotes dendritic growth. Phosphorylated by MAPK1; phosphorylation regulates heterodimerization and DNA-binding activities. Phosphorylation on Ser-265 and Ser-273 increases transactivation on the insulin promoter in glucose-stimulated insulinoma cells. Most abundant in pancreatic alpha- and beta-cells, less in brain and intestine.

The protein localises to the cytoplasm. Its subcellular location is the nucleus. In terms of biological role, acts as a transcriptional activator: mediates transcriptional activation by binding to E box-containing promoter consensus core sequences 5'-CANNTG-3'. Associates with the p300/CBP transcription coactivator complex to stimulate transcription of the secretin gene as well as the gene encoding the cyclin-dependent kinase inhibitor CDKN1A. Contributes to the regulation of several cell differentiation pathways, like those that promote the formation of early retinal ganglion cells, inner ear sensory neurons, granule cells forming either the cerebellum or the dentate gyrus cell layer of the hippocampus, endocrine islet cells of the pancreas and enteroendocrine cells of the small intestine. Together with PAX6 or SIX3, is required for the regulation of amacrine cell fate specification. Also required for dendrite morphogenesis and maintenance in the cerebellar cortex. Associates with chromatin to enhancer regulatory elements in genes encoding key transcriptional regulators of neurogenesis. This chain is Neurogenic differentiation factor 1 (NEUROD1), found in Mesocricetus auratus (Golden hamster).